An 822-amino-acid chain; its full sequence is Epidermal growth factor receptor kinase substrate 8 (822 aa).

Composition is skewed to polar residues over residues 1–10 and 17–30; these read MNGHISNHPS and SQMN…TFSQ. A disordered region spans residues 1 to 39; the sequence is MNGHISNHPSSFGMYPSQMNGYGSSPTFSQTDREHGSKT. Ser-58 carries the post-translational modification Phosphoserine. One can recognise a PTB domain in the interval 64–194; it reads QYRVEHLTTF…SDSKGGKQKR (131 aa). 2 disordered regions span residues 202 to 225 and 298 to 320; these read ISNA…GTVT and SKRK…TLRA. Positions 208–221 are enriched in pro residues; sequence SIPPPPRAPAPAPP. Position 223 is a phosphothreonine (Thr-223). Residues 299–309 show a composition bias toward basic residues; sequence KRKKNKKGKRK. The residue at position 317 (Thr-317) is a Phosphothreonine. Phosphoserine is present on Ser-476. One can recognise an SH3 domain in the interval 531–590; the sequence is QPKKYAKSKYDFVARNNSELSVLKDDILEILDDRKQWWKVRNASGDSGFVPNNILDIVRP. The interval 612–689 is disordered; that stretch reads EYGPRPADTP…VDRRKSQMEE (78 aa). The segment covering 618–645 has biased composition (pro residues); the sequence is ADTPPAPSPPPTPAPVPVPLPPSTPAPV. Ser-625 is subject to Phosphoserine. Phosphothreonine; by MAPK is present on Thr-629. Positions 649–822 are effector region; that stretch reads KVPANITRQN…VESFDEGSSH (174 aa). Phosphoserine is present on residues Ser-659, Ser-662, and Ser-685. A compositionally biased stretch (basic and acidic residues) spans 671-687; sequence DSQRHKQLPVDRRKSQM. The tract at residues 680-698 is amphipathic helix; it reads VDRRKSQMEEVQDELIHRL. Helix bundle stretches follow at residues 718-738, 752-757, 762-767, and 766-785; these read VINI…QSKG, GAQLFS, ELRTVC, and VCPE…AALE. The disordered stretch occupies residues 787 to 822; that stretch reads SSGSSELQEIMRRRQEKISAAASDSGVESFDEGSSH. Ser-811 and Ser-815 each carry phosphoserine.

This sequence belongs to the EPS8 family. In terms of assembly, homodimer. Part of a complex consisting of ABI1, EPS8 and SOS1. Interacts with MYO15A and WHRN. Interacts with LANCL1. Interacts with EGFR; mediates EPS8 phosphorylation. Interacts with BAIAP2. Interacts with SHB. In terms of processing, ubiquitinated by the SCF(FBXW5) E3 ubiquitin-protein ligase complex during G2 phase, leading to its transient degradation and subsequent cell shape changes required to allow mitotic progression. Reappears at the midzone of dividing cells. Post-translationally, phosphorylation at Ser-625 and Thr-629 by MAPK following BDNF treatment promotes removal from actin and filopodia formation. Phosphorylated by several receptor tyrosine kinases. In terms of tissue distribution, expressed in all tissues analyzed, including heart, brain, placenta, lung, liver, skeletal muscle, kidney and pancreas. Expressed in all epithelial and fibroblastic lines examined and in some, but not all, hematopoietic cells.

It localises to the cytoplasm. Its subcellular location is the cell cortex. The protein resides in the cell projection. It is found in the ruffle membrane. The protein localises to the growth cone. It localises to the stereocilium. Its subcellular location is the synapse. The protein resides in the synaptosome. Signaling adapter that controls various cellular protrusions by regulating actin cytoskeleton dynamics and architecture. Depending on its association with other signal transducers, can regulate different processes. Together with SOS1 and ABI1, forms a trimeric complex that participates in transduction of signals from Ras to Rac by activating the Rac-specific guanine nucleotide exchange factor (GEF) activity. Acts as a direct regulator of actin dynamics by binding actin filaments and has both barbed-end actin filament capping and actin bundling activities depending on the context. Displays barbed-end actin capping activity when associated with ABI1, thereby regulating actin-based motility process: capping activity is auto-inhibited and inhibition is relieved upon ABI1 interaction. Also shows actin bundling activity when associated with BAIAP2, enhancing BAIAP2-dependent membrane extensions and promoting filopodial protrusions. Involved in the regulation of processes such as axonal filopodia growth, stereocilia length, dendritic cell migration and cancer cell migration and invasion. Acts as a regulator of axonal filopodia formation in neurons: in the absence of neurotrophic factors, negatively regulates axonal filopodia formation via actin-capping activity. In contrast, it is phosphorylated in the presence of BDNF leading to inhibition of its actin-capping activity and stimulation of filopodia formation. Component of a complex with WHRN and MYO15A that localizes at stereocilia tips and is required for elongation of the stereocilia actin core. Indirectly involved in cell cycle progression; its degradation following ubiquitination being required during G2 phase to promote cell shape changes. This Homo sapiens (Human) protein is Epidermal growth factor receptor kinase substrate 8 (EPS8).